The chain runs to 848 residues: Protein MEI2-like 2 (848 aa).

RRM domains lie at 197-270 (RTLF…FSIP) and 282-355 (GTLV…PSRP). Disordered regions lie at residues 370–400 (IDQD…QYSS), 455–523 (NQPH…SQGQ), and 826–848 (ATGD…GEEL).

Its function is as follows. Probable RNA-binding protein that may play a role in growth regulation. This Oryza sativa subsp. japonica (Rice) protein is Protein MEI2-like 2 (ML2).